Consider the following 348-residue polypeptide: Rhodopsin (348 aa).

Residue Met1 is modified to N-acetylmethionine. The Extracellular segment spans residues 1-36; the sequence is MNGTEGPDFYIPMSNQTGVVRSPFEYPQYYLAEPWQ. 2 N-linked (GlcNAc...) asparagine glycosylation sites follow: Asn2 and Asn15. A helical transmembrane segment spans residues 37–61; the sequence is FSMLAAYMFLLIVLGFPINFLTLYV. The Cytoplasmic segment spans residues 62–73; it reads TVQHKKLRTPLN. Residues 74–96 traverse the membrane as a helical segment; the sequence is YILLNLAVADLFMVLGGFTTTLY. Residues 97–110 lie on the Extracellular side of the membrane; the sequence is TSLHGYFVFGPTGC. A disulfide bond links Cys110 and Cys187. Residues 111–133 form a helical membrane-spanning segment; sequence NVEGFFATLGGEIALWSLVVLAI. A 'Ionic lock' involved in activated form stabilization motif is present at residues 134–136; it reads ERY. At 134–152 the chain is on the cytoplasmic side; sequence ERYVVVCKPMSNFRFGENH. The chain crosses the membrane as a helical span at residues 153 to 173; that stretch reads AIMGVAFTWIMALACAAPPLV. The Extracellular segment spans residues 174–202; that stretch reads GWSRYIPEGMQCSCGIDYYTLKPEVNNES. A Zn(2+)-binding site is contributed by Glu201. The helical transmembrane segment at 203 to 224 threads the bilayer; sequence FVIYMFVVHFTIPLIIIFFCYG. Residues 225-252 lie on the Cytoplasmic side of the membrane; it reads QLVFTVKEAAAQQQESATTQKAEKEVTR. Residues 253–274 traverse the membrane as a helical segment; sequence MVIIMVIAFLICWVPYASVAFY. Topologically, residues 275–286 are extracellular; the sequence is IFTHQGSNFGPI. A Zn(2+)-binding site is contributed by Gln279. The helical transmembrane segment at 287 to 308 threads the bilayer; that stretch reads FMTIPAFFAKSSSIYNPVIYIM. Lys296 is modified (N6-(retinylidene)lysine). The Cytoplasmic segment spans residues 309–348; that stretch reads MNKQFRNCMLTTICCGKNPLGDDEASATASKTETSQVAPA. S-palmitoyl cysteine attachment occurs at residues Cys322 and Cys323. Residues 330–348 are interaction with SAG; that stretch reads DDEASATASKTETSQVAPA. Ser334 carries the phosphoserine modification. The residue at position 336 (Thr336) is a Phosphothreonine. Position 338 is a phosphoserine (Ser338). Phosphothreonine occurs at positions 340 and 342. The residue at position 343 (Ser343) is a Phosphoserine.

This sequence belongs to the G-protein coupled receptor 1 family. Opsin subfamily. As to quaternary structure, homodimer. May form a complex composed of RHO, GRK1 and RCVRN in a Ca(2+)-dependent manner; RCVRN prevents the interaction between GRK1 and RHO. Interacts with GRK1. Interacts (phosphorylated form) with SAG. Interacts with GNAT1. Interacts with GNAT3. SAG and G-proteins compete for a common binding site. Interacts with PRCD; the interaction promotes PRCD stability. Forms a complex with ASAP1 and ARF4. Forms a complex with ASAP1, RAB11A, Rabin8/RAB3IP, ARF4 and RAB11FIP3; the complex regulates Golgi-to-cilia rhodopsin/RHO transport in photoreceptors. Phosphorylated on some or all of the serine and threonine residues present in the C-terminal region. Post-translationally, contains one covalently linked retinal chromophore. Upon light absorption, the covalently bound 11-cis-retinal is converted to all-trans-retinal. After hydrolysis of the Schiff base and release of the covalently bound all-trans-retinal, active rhodopsin is regenerated by binding of a fresh molecule of 11-cis-retinal.

Its subcellular location is the membrane. It is found in the cell projection. It localises to the cilium. The protein localises to the photoreceptor outer segment. In terms of biological role, photoreceptor required for image-forming vision at low light intensity. Required for photoreceptor cell viability after birth. Light-induced isomerization of 11-cis to all-trans retinal triggers a conformational change that activates signaling via G-proteins. Subsequent receptor phosphorylation mediates displacement of the bound G-protein alpha subunit by the arrestin SAG and terminates signaling. This is Rhodopsin (RHO) from Oryctolagus cuniculus (Rabbit).